Consider the following 276-residue polypeptide: uncharacterized protein (276 aa).

15 to 22 (GKGGVGKS) is a binding site for ATP. 4Fe-4S ferredoxin-type domains follow at residues 68 to 96 (EIYEINDDCIRCGKCLDVCQFDAIGDFKI) and 92 to 121 (GDFKINPILCEGCGACELICEFDAIEPIKR). Positions 76, 79, 82, 86, 101, 104, 107, and 111 each coordinate [4Fe-4S] cluster.

This is an uncharacterized protein from Methanocaldococcus jannaschii (strain ATCC 43067 / DSM 2661 / JAL-1 / JCM 10045 / NBRC 100440) (Methanococcus jannaschii).